An 855-amino-acid chain; its full sequence is DNA mismatch repair protein MutS (855 aa).

613 to 620 contributes to the ATP binding site; that stretch reads GPNMGGKS. The interval 795–816 is disordered; the sequence is ETTSLPHEVPSQQSGKPASPMQ. Residues 796–816 are compositionally biased toward polar residues; it reads TTSLPHEVPSQQSGKPASPMQ.

It belongs to the DNA mismatch repair MutS family.

This protein is involved in the repair of mismatches in DNA. It is possible that it carries out the mismatch recognition step. This protein has a weak ATPase activity. This is DNA mismatch repair protein MutS from Pseudomonas paraeruginosa (strain DSM 24068 / PA7) (Pseudomonas aeruginosa (strain PA7)).